Consider the following 88-residue polypeptide: Small cysteine and glycine repeat-containing protein 1 (88 aa).

The 10 X 2 AA repeats of CG stretch occupies residues C4–G72.

It belongs to the KRTAP type 28 family.

In terms of biological role, in the hair cortex, hair keratin intermediate filaments are embedded in an interfilamentous matrix, consisting of hair keratin-associated proteins (KRTAP), which are essential for the formation of a rigid and resistant hair shaft through their extensive disulfide bond cross-linking with abundant cysteine residues of hair keratins. The matrix proteins include the high-sulfur and high-glycine-tyrosine keratins. In Homo sapiens (Human), this protein is Small cysteine and glycine repeat-containing protein 1.